The primary structure comprises 139 residues: ATP synthase epsilon chain (139 aa).

The protein belongs to the ATPase epsilon chain family. As to quaternary structure, F-type ATPases have 2 components, CF(1) - the catalytic core - and CF(0) - the membrane proton channel. CF(1) has five subunits: alpha(3), beta(3), gamma(1), delta(1), epsilon(1). CF(0) has three main subunits: a, b and c.

It localises to the cell membrane. Its function is as follows. Produces ATP from ADP in the presence of a proton gradient across the membrane. The polypeptide is ATP synthase epsilon chain (Pediococcus pentosaceus (strain ATCC 25745 / CCUG 21536 / LMG 10740 / 183-1w)).